We begin with the raw amino-acid sequence, 616 residues long: Matrix metalloproteinase-21 (616 aa).

The N-terminal stretch at 1 to 22 (MPTAPALGALLLLLGALTPGHQ) is a signal peptide. A propeptide spanning residues 23–192 (EKLFHSRDHS…TSTSKIRKKR (170 aa)) is cleaved from the precursor. Positions 139–146 (PRCGVPDN) match the Cysteine switch motif. Cys-141 provides a ligand contact to Zn(2+). The segment at 157–186 (SNSNNVTEKASGKSLNTTTNQNPENGTSTS) is disordered. 3 N-linked (GlcNAc...) asparagine glycosylation sites follow: Asn-161, Asn-172, and Asn-181. Zn(2+) is bound at residue His-329. Residue Glu-330 is part of the active site. Residues His-333 and His-339 each coordinate Zn(2+). A disulfide bridge connects residues Cys-375 and Cys-606. Hemopexin repeat units follow at residues 376–435 (EGSF…WHGI), 437–493 (AEGI…FPKI), 494–542 (PSPI…FPAV), and 549–605 (FGNI…WTDI). A glycan (N-linked (GlcNAc...) asparagine) is linked at Asn-418. N-linked (GlcNAc...) asparagine glycosylation occurs at Asn-597.

It belongs to the peptidase M10A family. Requires Zn(2+) as cofactor. It depends on Ca(2+) as a cofactor. In terms of processing, the precursor is cleaved by a furin endopeptidase.

The protein resides in the secreted. In terms of biological role, may play a role in gastrulation-related cell movement. Plays a specialized role in the generation of left-right asymmetry during embryogenesis. May act as a negative regulator of the NOTCH-signaling pathway. This chain is Matrix metalloproteinase-21 (MMP21), found in Cynops pyrrhogaster (Japanese fire-bellied newt).